A 497-amino-acid polypeptide reads, in one-letter code: COP9 signalosome complex subunit 6 (497 aa).

An MPN domain is found at 21–162 (VALHPLPILE…LTIYESNLEI (142 aa)). 3 disordered regions span residues 230–282 (ATED…KNRD), 324–350 (YLSS…LDQP), and 435–497 (AKNS…RFDH). Residues 236–246 (SDKPLMKKVVD) show a composition bias toward basic and acidic residues. Composition is skewed to low complexity over residues 258 to 272 (SDDA…SSAA) and 333 to 343 (QQQQQQQQQQQ). Basic and acidic residues predominate over residues 440–453 (RREQASHGGGERFN). Residues 475-488 (VGEGSASGSGGSGP) show a composition bias toward gly residues.

It belongs to the peptidase M67A family. CSN6 subfamily. As to quaternary structure, component of the COP9 signalosome (CSN) complex.

Its subcellular location is the cytoplasm. It localises to the nucleus. In terms of biological role, component of the COP9 signalosome (CSN) complex that acts as an regulator of the ubiquitin (Ubl) conjugation pathway by mediating the deneddylation of the cullin subunit of SCF-type E3 ubiquitin-protein ligase complexes. The CSN complex is involved in the regulation of the circadian clock through its control of the stability of the SCF(FWD1) complex. The chain is COP9 signalosome complex subunit 6 (csn-6) from Neurospora crassa (strain ATCC 24698 / 74-OR23-1A / CBS 708.71 / DSM 1257 / FGSC 987).